Here is a 333-residue protein sequence, read N- to C-terminus: tRNA N6-adenosine threonylcarbamoyltransferase (333 aa).

Positions 111 and 115 each coordinate Fe cation. Substrate is bound by residues 134 to 138 (LVSGG), Asp-167, Gly-180, and Asn-272. Asp-300 provides a ligand contact to Fe cation.

The protein belongs to the KAE1 / TsaD family. Fe(2+) is required as a cofactor.

It localises to the cytoplasm. It carries out the reaction L-threonylcarbamoyladenylate + adenosine(37) in tRNA = N(6)-L-threonylcarbamoyladenosine(37) in tRNA + AMP + H(+). In terms of biological role, required for the formation of a threonylcarbamoyl group on adenosine at position 37 (t(6)A37) in tRNAs that read codons beginning with adenine. Is involved in the transfer of the threonylcarbamoyl moiety of threonylcarbamoyl-AMP (TC-AMP) to the N6 group of A37, together with TsaE and TsaB. TsaD likely plays a direct catalytic role in this reaction. In Legionella pneumophila (strain Lens), this protein is tRNA N6-adenosine threonylcarbamoyltransferase.